The sequence spans 101 residues: Small ribosomal subunit protein uS17 (101 aa).

The protein belongs to the universal ribosomal protein uS17 family. Part of the 30S ribosomal subunit.

One of the primary rRNA binding proteins, it binds specifically to the 5'-end of 16S ribosomal RNA. This is Small ribosomal subunit protein uS17 from Kosmotoga olearia (strain ATCC BAA-1733 / DSM 21960 / TBF 19.5.1).